A 366-amino-acid polypeptide reads, in one-letter code: Putative [LysW]-aminoadipate semialdehyde/glutamate semialdehyde transaminase (366 aa).

Pyridoxal 5'-phosphate-binding positions include 90 to 91 (GT) and Phe-117. A substrate-binding site is contributed by Arg-120. Position 202–205 (202–205 (DEVQ)) interacts with pyridoxal 5'-phosphate. The residue at position 230 (Lys-230) is an N6-(pyridoxal phosphate)lysine. Ser-254 provides a ligand contact to substrate. Residue Thr-255 participates in pyridoxal 5'-phosphate binding.

This sequence belongs to the class-III pyridoxal-phosphate-dependent aminotransferase family. LysJ subfamily. Homodimer. The cofactor is pyridoxal 5'-phosphate.

It is found in the cytoplasm. The enzyme catalyses [amino-group carrier protein]-C-terminal-gamma-(L-lysyl)-L-glutamate + 2-oxoglutarate = [amino-group carrier protein]-C-terminal-N-(1-carboxy-5-oxopentan-1-yl)-L-glutamine + L-glutamate. It carries out the reaction [amino-group carrier protein]-C-terminal-gamma-(L-ornithyl)-L-glutamate + 2-oxoglutarate = [amino-group carrier protein]-C-terminal-gamma-(L-glutamyl-5-semialdehyde)-L-glutamate + L-glutamate. It participates in amino-acid biosynthesis; L-lysine biosynthesis via AAA pathway; L-lysine from L-alpha-aminoadipate (Thermus route): step 4/5. Its pathway is amino-acid biosynthesis; L-arginine biosynthesis. In terms of biological role, involved in both the arginine and lysine biosynthetic pathways. This chain is Putative [LysW]-aminoadipate semialdehyde/glutamate semialdehyde transaminase, found in Pyrococcus horikoshii (strain ATCC 700860 / DSM 12428 / JCM 9974 / NBRC 100139 / OT-3).